We begin with the raw amino-acid sequence, 342 residues long: Ferredoxin--NADP reductase (342 aa).

FAD-binding residues include C17, D36, Q44, Y49, I89, F124, D289, and T330.

Belongs to the ferredoxin--NADP reductase type 2 family. Homodimer. It depends on FAD as a cofactor.

The catalysed reaction is 2 reduced [2Fe-2S]-[ferredoxin] + NADP(+) + H(+) = 2 oxidized [2Fe-2S]-[ferredoxin] + NADPH. This is Ferredoxin--NADP reductase from Rhodopseudomonas palustris (strain HaA2).